The chain runs to 282 residues: MENGFLLINKEQGKTSFETLFPIKKYFNTNHVGHAGILDKFASGILIALVGKYTKLANYFMSLDKEYVAEFRFGLETDTLDPNGRIVNKTDYIPNLEDIDLKLKDFVGEIYQSPPRFSSVHINGSRAYKLALNGKFFEIKKRRVNVYDIQRLSYDFSSSLLSLKISCSKGTYIRSIARDLAYSLNSCAYVSSLKRTKVGIFRLEDSTLCKNLSKASLISLESLKSFEKVCIDSSKINLVKNGAYVEIQININEFKILKSREGEILAVIKGIDLNKYKYVIIF.

The Nucleophile role is filled by Asp-39.

The protein belongs to the pseudouridine synthase TruB family. Type 1 subfamily.

The enzyme catalyses uridine(55) in tRNA = pseudouridine(55) in tRNA. In terms of biological role, responsible for synthesis of pseudouridine from uracil-55 in the psi GC loop of transfer RNAs. The polypeptide is tRNA pseudouridine synthase B (Borreliella afzelii (strain PKo) (Borrelia afzelii)).